The following is a 716-amino-acid chain: MALTAALKAQIAAWYKALQEQIPDFIPRAPQRQMIADVAKTLAGEEGRHLAIEAPTGVGKTLSYLIPGIAIAREEQKTLVVSTANVALQDQIYSKDLPLLKKIIPDLKFTAAFGRGRYVCPRNLTALASTEPTQQDLLAFLDDELTPNNQEEQKRCAKLKGDLDTYKWDGLRDHTDIAIDDDLWRRLSTDKASCLNRNCYYYRECPFFVARREIQEAEVVVANHALVMAAMESEAVLPDPKNLLLVLDEGHHLPDVARDALEMSAEITAPWYRLQLDLFTKLVATCMEQFRPKTIPPLAIPERLNAHCEELYELIASLNNILNLYMPAGQEAEHRFAMGELPDEVLEICQRLAKLTEMLRGLAELFLNDLSEKTGSHDIVRLHRLILQMNRALGMFEAQSKLWRLASLAQSSGAPVTKWATREEREGQLHLWFHCVGIRVSDQLERLLWRSIPHIIVTSATLRSLNSFSRLQEMSGLKEKAGDRFVALDSPFNHCEQGKIVIPRMRVEPSIDNEEQHIAEMAAFFREQVESKKHLGMLVLFASGRAMQRFLDYVTDLRLMLLVQGDQPRYRLVELHRKRVANGERSVLVGLQSFAEGLDLKGDLLSQVHIHKIAFPPIDSPVVITEGEWLKSLNRYPFEVQSLPSASFNLIQQVGRLIRSHGCWGEVVIYDKRLLTKNYGKRLLDALPVFPIEQPEVPEGIVKKKEKTKSPRRRRR.

Residues 17–294 (ALQEQIPDFI…TCMEQFRPKT (278 aa)) form the Helicase ATP-binding domain. An ATP-binding site is contributed by 54–61 (APTGVGKT). C120 provides a ligand contact to [4Fe-4S] cluster. A DEAH box motif is present at residues 131–134 (EPTQ). [4Fe-4S] cluster contacts are provided by C194, C199, and C205. Residues 248–251 (DEGH) carry the DEAH box motif. One can recognise a Helicase C-terminal domain in the interval 517-698 (HIAEMAAFFR…VFPIEQPEVP (182 aa)).

Belongs to the helicase family. DinG subfamily. Type 1 sub-subfamily. Requires [4Fe-4S] cluster as cofactor.

The catalysed reaction is Couples ATP hydrolysis with the unwinding of duplex DNA at the replication fork by translocating in the 5'-3' direction. This creates two antiparallel DNA single strands (ssDNA). The leading ssDNA polymer is the template for DNA polymerase III holoenzyme which synthesizes a continuous strand.. It carries out the reaction ATP + H2O = ADP + phosphate + H(+). Functionally, DNA-dependent ATPase and 5'-3' DNA helicase. Unwinds D-loops, R-loops, forked DNA and G-quadruplex DNA. The chain is ATP-dependent DNA helicase DinG from Escherichia coli O6:H1 (strain CFT073 / ATCC 700928 / UPEC).